The following is a 510-amino-acid chain: Histidine ammonia-lyase (510 aa).

Positions 143–145 (ASG) form a cross-link, 5-imidazolinone (Ala-Gly). Ser144 carries the 2,3-didehydroalanine (Ser) modification.

This sequence belongs to the PAL/histidase family. Contains an active site 4-methylidene-imidazol-5-one (MIO), which is formed autocatalytically by cyclization and dehydration of residues Ala-Ser-Gly.

The protein localises to the cytoplasm. The catalysed reaction is L-histidine = trans-urocanate + NH4(+). The protein operates within amino-acid degradation; L-histidine degradation into L-glutamate; N-formimidoyl-L-glutamate from L-histidine: step 1/3. The chain is Histidine ammonia-lyase from Aliivibrio fischeri (strain MJ11) (Vibrio fischeri).